Consider the following 590-residue polypeptide: Rho GTPase-activating protein 36 (590 aa).

The Rho-GAP domain occupies 214–414; it reads MSLNPIAQQI…AMIDNWDILF (201 aa). The interval 526–590 is disordered; sequence IPNNEDTDSD…KGKFATRFFP (65 aa).

In terms of assembly, may interacts (via the Rho-GAP domain) with the active form of RAC1.

Functionally, GTPase activator for the Rho-type GTPases by converting them to an inactive GDP-bound state. The protein is Rho GTPase-activating protein 36 (Arhgap36) of Mus musculus (Mouse).